The following is a 146-amino-acid chain: Large ribosomal subunit protein uL16 (146 aa).

This sequence belongs to the universal ribosomal protein uL16 family. Part of the 50S ribosomal subunit.

Its function is as follows. Binds 23S rRNA and is also seen to make contacts with the A and possibly P site tRNAs. This chain is Large ribosomal subunit protein uL16, found in Lactobacillus helveticus (strain DPC 4571).